The sequence spans 944 residues: MEYNFREIEKKWQQRWVEEKTYQVTEDESKQKFYVLNMFPYPSGAGLHVGHPLGYIASDIYARYKRLRGFNVLNPMGYDAYGLPAEQYAIQTGQHPAITTKANIDRYREQLDKIGFSFDWSREIRTCEPEYYHWTQWAFQKMFNSYYCNDEQQARPIQELIDAFAIYGNEGLNAACSEELSFTAKEWKAKSEKEQQEILMNYRIAYLGETMVNWCQALGTVLANDEVIDGVSERGGFPVVQKKMRQWCLRVSAYAQRLLDGLDTIDWTESLKETQKNWIGRSEGAEVQFKVKDSDLEFTIFTTRADTMFGVTFMVLAPESDLVAQLTTPAQKAEVDAYLDRTKKRTERERIADRSVTGVFSGSYAINPFTGEAVPIWISDYVLAGYGTGAIMAVPAHDSRDYAFAKHFGLEIRPLVEGCDVSEESFDAKEGIVCNSPRPDVTPYCDLSLNGLTIKEAIEKTKQYVKEHNLGRVKVNYRLRDAIFSRQRYWGEPFPVYYKDGMPYMIDEDCLPLELPEVDKFLPTETGEPPLGHAKEWAWDTVNKCTVENEKIDNVTIFPLELNTMPGFAGSSAYYLRYMDPHNNKALVDPKVDEYWKNVDLYVGGTEHATGHLIYSRFWNKFLHDVGASVVEEPFQKLVNQGMIQGRSNFVYRIKDTHTFVSLNLKDQYEVTPLHVDVNIVSNDILDLEAFKAWRPEYAEAEFILEDGKYICGWAVEKMSKSMFNVVNPDMIVDKYGADTLRMYEMFLGPVEQSKPWDTNGIDGVHRFIRKFWSLFYSRTDEYLVKDEPATKEELKSLHKLIKKVTGDIEQFSYNTSVSAFMICVNELSNLKCNKKEILEQLVITLAPFAPHVCEELWDTLGHETSVCDAAWPAYNEEYLKEDTINYTISFNGKARFNMEFDADAASDAIQAAVLADERSQKWIEGKTPKKIIVVPKKIVNVVV.

The 'HIGH' region signature appears at 40 to 51 (PYPSGAGLHVGH). Residues 718-722 (KMSKS) carry the 'KMSKS' region motif. An ATP-binding site is contributed by Lys-721.

It belongs to the class-I aminoacyl-tRNA synthetase family.

The protein localises to the cytoplasm. The catalysed reaction is tRNA(Leu) + L-leucine + ATP = L-leucyl-tRNA(Leu) + AMP + diphosphate. In Bacteroides thetaiotaomicron (strain ATCC 29148 / DSM 2079 / JCM 5827 / CCUG 10774 / NCTC 10582 / VPI-5482 / E50), this protein is Leucine--tRNA ligase.